Reading from the N-terminus, the 215-residue chain is Putative ribosome biogenesis protein slx9-like (215 aa).

3 disordered regions span residues 49 to 121 (IIPS…GLGM), 133 to 157 (DSMK…MSLK), and 189 to 215 (LQNQ…LKRK).

Belongs to the SLX9 family.

It localises to the nucleus. Its subcellular location is the nucleolus. Its function is as follows. Involved in ribosome biogenesis. In Dictyostelium discoideum (Social amoeba), this protein is Putative ribosome biogenesis protein slx9-like.